The primary structure comprises 266 residues: Glucosamine-6-phosphate deaminase (266 aa).

D72 (proton acceptor; for enolization step) is an active-site residue. The For ring-opening step role is filled by D141. H143 functions as the Proton acceptor; for ring-opening step in the catalytic mechanism. The active-site For ring-opening step is E148.

It belongs to the glucosamine/galactosamine-6-phosphate isomerase family. NagB subfamily. In terms of assembly, homohexamer.

It catalyses the reaction alpha-D-glucosamine 6-phosphate + H2O = beta-D-fructose 6-phosphate + NH4(+). The protein operates within amino-sugar metabolism; N-acetylneuraminate degradation; D-fructose 6-phosphate from N-acetylneuraminate: step 5/5. Its activity is regulated as follows. Allosterically activated by N-acetylglucosamine 6-phosphate (GlcNAc6P). Functionally, catalyzes the reversible isomerization-deamination of glucosamine 6-phosphate (GlcN6P) to form fructose 6-phosphate (Fru6P) and ammonium ion. The chain is Glucosamine-6-phosphate deaminase from Pectobacterium carotovorum subsp. carotovorum (strain PC1).